The chain runs to 153 residues: 6,7-dimethyl-8-ribityllumazine synthase (153 aa).

5-amino-6-(D-ribitylamino)uracil is bound by residues phenylalanine 21, alanine 55–glutamate 57, and threonine 79–isoleucine 81. Position 84 to 85 (alanine 84 to threonine 85) interacts with (2S)-2-hydroxy-3-oxobutyl phosphate. Histidine 87 acts as the Proton donor in catalysis. Residue phenylalanine 112 coordinates 5-amino-6-(D-ribitylamino)uracil. Arginine 126 serves as a coordination point for (2S)-2-hydroxy-3-oxobutyl phosphate.

It belongs to the DMRL synthase family. As to quaternary structure, forms an icosahedral capsid composed of 60 subunits, arranged as a dodecamer of pentamers.

The catalysed reaction is (2S)-2-hydroxy-3-oxobutyl phosphate + 5-amino-6-(D-ribitylamino)uracil = 6,7-dimethyl-8-(1-D-ribityl)lumazine + phosphate + 2 H2O + H(+). The protein operates within cofactor biosynthesis; riboflavin biosynthesis; riboflavin from 2-hydroxy-3-oxobutyl phosphate and 5-amino-6-(D-ribitylamino)uracil: step 1/2. Functionally, catalyzes the formation of 6,7-dimethyl-8-ribityllumazine by condensation of 5-amino-6-(D-ribitylamino)uracil with 3,4-dihydroxy-2-butanone 4-phosphate. This is the penultimate step in the biosynthesis of riboflavin. This Bacillus cereus (strain ATCC 10987 / NRS 248) protein is 6,7-dimethyl-8-ribityllumazine synthase.